The following is a 1036-amino-acid chain: Isoleucine--tRNA ligase (1036 aa).

Residues P46–H56 carry the 'HIGH' region motif. Residues K589–R593 carry the 'KMSKS' region motif. Residue K592 participates in ATP binding.

It belongs to the class-I aminoacyl-tRNA synthetase family. IleS type 2 subfamily. Monomer. It depends on Zn(2+) as a cofactor.

Its subcellular location is the cytoplasm. The catalysed reaction is tRNA(Ile) + L-isoleucine + ATP = L-isoleucyl-tRNA(Ile) + AMP + diphosphate. Functionally, catalyzes the attachment of isoleucine to tRNA(Ile). As IleRS can inadvertently accommodate and process structurally similar amino acids such as valine, to avoid such errors it has two additional distinct tRNA(Ile)-dependent editing activities. One activity is designated as 'pretransfer' editing and involves the hydrolysis of activated Val-AMP. The other activity is designated 'posttransfer' editing and involves deacylation of mischarged Val-tRNA(Ile). The polypeptide is Isoleucine--tRNA ligase (Chlamydia trachomatis serovar L2b (strain UCH-1/proctitis)).